The primary structure comprises 640 residues: Threonine--tRNA ligase (640 aa).

One can recognise a TGS domain in the interval 1 to 61; that stretch reads MPIITLPNGD…TEDATLQIIT (61 aa). A catalytic region spans residues 242–533; that stretch reads DHRKIGKALD…LIEHYAGFMP (292 aa). Positions 333, 384, and 510 each coordinate Zn(2+).

Belongs to the class-II aminoacyl-tRNA synthetase family. Homodimer. The cofactor is Zn(2+).

Its subcellular location is the cytoplasm. It carries out the reaction tRNA(Thr) + L-threonine + ATP = L-threonyl-tRNA(Thr) + AMP + diphosphate + H(+). In terms of biological role, catalyzes the attachment of threonine to tRNA(Thr) in a two-step reaction: L-threonine is first activated by ATP to form Thr-AMP and then transferred to the acceptor end of tRNA(Thr). Also edits incorrectly charged L-seryl-tRNA(Thr). This Acinetobacter baylyi (strain ATCC 33305 / BD413 / ADP1) protein is Threonine--tRNA ligase.